The sequence spans 540 residues: MSTSEFVLAQSATVPAPDIEYGQLSPMLIVFGVAVAGVLVEAFLPRRGRYSSHLVLALGGLTAAFVAVVLLAGTRDSVVGGAVAVDGPTLFLQGTILLISIPAILIIAERSVDSGVAAATAEVTAVRGAEPEGGTDAFTPQAFAVPGSVAEREATRNAPGHTEVFPLTLFAVGGMLLFPASNDLLTMFVALEVLSLPLYLLCGLARRRRLLSQEAALKYFLLGAFSSAFFLFGVALLYGYAGTVALPGIADALARGTEDRTLALIGTALLSVGLLFKIGAVPFHSWIPDVYQGAPTPITAFMAAATKVAAVGAMLRIFYVALPDLRADWRPVMWGVAILTMVVGAVMAVTQNDVKRMLAYSSVAHAGFILTGLVAANRAGLSSTMFYLLAYGFSTLGAFAVVTLVRDSRGEATDLSRWAGLGRRSPLVGGVFALFLLAFAGIPLTSGFVSKFAVFQAALEGGAVPLVLVGVVSSAIAAFFYVRVIVLMFFSEPQSDAPTIVVPSMFTAAAIAVGVVVTVVLGILPQGALDLADQAAVFFR.

The next 14 helical transmembrane spans lie at 24-44 (LSPM…EAFL), 54-74 (LVLA…LAGT), 88-108 (PTLF…LIIA), 158-178 (APGH…MLLF), 184-204 (LLTM…LCGL), 219-239 (YFLL…LLYG), 263-283 (ALIG…AVPF), 295-315 (PTPI…GAML), 331-351 (PVMW…AVTQ), 357-377 (MLAY…VAAN), 385-405 (MFYL…VTLV), 428-448 (VGGV…TSGF), 462-482 (GAVP…FFYV), and 505-525 (MFTA…GILP).

It belongs to the complex I subunit 2 family. In terms of assembly, NDH-1 is composed of 14 different subunits. Subunits NuoA, H, J, K, L, M, N constitute the membrane sector of the complex.

Its subcellular location is the cell membrane. It catalyses the reaction a quinone + NADH + 5 H(+)(in) = a quinol + NAD(+) + 4 H(+)(out). Its function is as follows. NDH-1 shuttles electrons from NADH, via FMN and iron-sulfur (Fe-S) centers, to quinones in the respiratory chain. The immediate electron acceptor for the enzyme in this species is believed to be a menaquinone. Couples the redox reaction to proton translocation (for every two electrons transferred, four hydrogen ions are translocated across the cytoplasmic membrane), and thus conserves the redox energy in a proton gradient. This chain is NADH-quinone oxidoreductase subunit N, found in Rhodococcus opacus (strain B4).